The chain runs to 336 residues: Transmembrane protein 120A (336 aa).

At 1-131 the chain is on the cytoplasmic side; sequence MNSPALQDCV…KQSKFAYKDE (131 aa). Lys-129 is a binding site for CoA. Residues 132–151 form a helical membrane-spanning segment; it reads YEKFKLYLTMILMVLSFICR. Topologically, residues 152–157 are extracellular; it reads FVLNSR. Residues 158–176 traverse the membrane as a helical segment; it reads VTDAVFNFLLVWYYCTLTI. Residues 177–189 lie on the Cytoplasmic side of the membrane; it reads RESILINNGSRIK. CoA-binding residues include Ser-186 and Arg-187. Residues 190 to 208 traverse the membrane as a helical segment; that stretch reads GWWVLNHYISTFLSGVMLT. Residues 209 to 217 are Extracellular-facing; it reads WPDGLMYQM. The chain crosses the membrane as a helical span at residues 218–239; that stretch reads FRNQFLSFSMYQSFVQFLQYYY. CoA contacts are provided by Gln-236, Tyr-239, and Gln-240. Residues 240 to 269 lie on the Cytoplasmic side of the membrane; sequence QSGCLYRLRALGERHNMDLTVEGFQSWMWR. Residues 270 to 293 form a helical membrane-spanning segment; the sequence is GLTFLLPFLFFGQFWQLYNAITLF. The Extracellular portion of the chain corresponds to 294 to 303; it reads KLARHPECKE. A helical membrane pass occupies residues 304–329; that stretch reads WQVIMCGLPFLVHFLGNFFTTLRVVH. Over 330-336 the chain is Cytoplasmic; sequence QKFQKQN. Lys-331 provides a ligand contact to CoA.

The protein belongs to the TMEM120 family. In terms of assembly, homodimer.

It localises to the cell membrane. Its subcellular location is the nucleus inner membrane. The protein resides in the endoplasmic reticulum. Its function is as follows. Multifunctional protein involved in mechanosensation, and plays an essential role in lipid metabolism. May function as a potential ion channel involved in sensing mechanical stimuli. TMEM120A is structurally similar to a lipid-modifying enzyme, ELOVL7, and contains a bound coenzyme A molecule, which suggests it might function as an enzyme in lipid metabolism. This chain is Transmembrane protein 120A, found in Xenopus tropicalis (Western clawed frog).